The chain runs to 215 residues: Cytochrome b6 (215 aa).

The chain crosses the membrane as a helical span at residues 32–52 (IFYCLGGITLTCFLVQVATGF). Position 35 (Cys35) interacts with heme c. Residues His86 and His100 each contribute to the heme b site. 3 helical membrane-spanning segments follow: residues 90–110 (ASMM…TGGF), 116–136 (LTWV…VTGY), and 186–206 (LHTF…FLMI). Heme b contacts are provided by His187 and His202.

This sequence belongs to the cytochrome b family. PetB subfamily. As to quaternary structure, the 4 large subunits of the cytochrome b6-f complex are cytochrome b6, subunit IV (17 kDa polypeptide, PetD), cytochrome f and the Rieske protein, while the 4 small subunits are PetG, PetL, PetM and PetN. The complex functions as a dimer. Heme b is required as a cofactor. The cofactor is heme c.

The protein localises to the plastid. Its subcellular location is the chloroplast thylakoid membrane. In terms of biological role, component of the cytochrome b6-f complex, which mediates electron transfer between photosystem II (PSII) and photosystem I (PSI), cyclic electron flow around PSI, and state transitions. This is Cytochrome b6 from Pisum sativum (Garden pea).